A 258-amino-acid chain; its full sequence is Methanol--corrinoid protein (258 aa).

A B12-binding N-terminal domain is found at 30-124 (AEELYPKDEL…NSGATPKTKG (95 aa)). The B12-binding domain maps to 123–248 (KGTVVCHVAE…DAIIAGTTDV (126 aa)). Methylcob(III)alamin is bound at residue His-136.

The protein belongs to the methylamine corrinoid protein family. Heterotetramer, composed of 2 MtaB and 2 MtaC subunits.

Functionally, harbors a corrinoid prosthetic group and acts as a methyl group carrier in methanogenesis in the methanol pathway. The methyl group of methanol is first transferred to the corrinoid prosthetic group of MtaC in the cob(I)amide oxidation state. This reaction is mediated by MtaB. The methyl group from MtaC is then transferred to coenzyme M by MtaA. The chain is Methanol--corrinoid protein (mtaC) from Methanosarcina barkeri (strain Fusaro / DSM 804).